The chain runs to 941 residues: Putative helicase 121R (941 aa).

Positions 285-323 (LKQELKDIEGENSETIKRNLKDAKDLLKILNKKRANEYN) form a coiled coil. Positions 492–514 (DDSGRDSEEDSQEEEVSSSQEQL) are disordered. Positions 498 to 507 (SEEDSQEEEV) are enriched in acidic residues. The SF3 helicase domain maps to 609–791 (EEVLELYNFL…FVAREKCPET (183 aa)). An ATP-binding site is contributed by 653–660 (GNGNNGKS).

Belongs to the IIV-6 184L family.

The protein is Putative helicase 121R of Invertebrate iridescent virus 3 (IIV-3).